Here is a 354-residue protein sequence, read N- to C-terminus: Hyaluronan and proteoglycan link protein 1 (354 aa).

Positions 1–15 are excised as a propeptide; it reads MKSLLLLVLISICWA. Asn21 and Asn56 each carry an N-linked (GlcNAc...) asparagine glycan. The 115-residue stretch at 38–152 folds into the Ig-like V-type domain; that stretch reads PHLLVEAEQA…EGLEDDTVVV (115 aa). Cystine bridges form between Cys61/Cys139, Cys181/Cys252, Cys205/Cys226, Cys279/Cys349, and Cys304/Cys325. 2 Link domains span residues 159 to 254 and 259 to 351; these read VVFP…FCFT and GRFY…YCFR.

This sequence belongs to the HAPLN family. Widely expressed. Weakly expressed in the brain.

It is found in the secreted. The protein resides in the extracellular space. Its subcellular location is the extracellular matrix. Stabilizes the aggregates of proteoglycan monomers with hyaluronic acid in the extracellular cartilage matrix. The protein is Hyaluronan and proteoglycan link protein 1 (HAPLN1) of Homo sapiens (Human).